A 66-amino-acid chain; its full sequence is GRDAYIAQPENCVYECAKSSYCNDLCTKNGAKSGYCQWLGRWGNACYCIDLPDKVPIRIEGKCHFA.

In terms of domain architecture, LCN-type CS-alpha/beta spans 2–64; that stretch reads RDAYIAQPEN…VPIRIEGKCH (63 aa). 4 disulfides stabilise this stretch: Cys-12/Cys-63, Cys-16/Cys-36, Cys-22/Cys-46, and Cys-26/Cys-48.

Belongs to the long (4 C-C) scorpion toxin superfamily. Sodium channel inhibitor family. Alpha subfamily. Expressed by the venom gland.

It is found in the secreted. In terms of biological role, alpha toxins bind voltage-independently at site-3 of sodium channels (Nav) and inhibit the inactivation of the activated channels, thereby blocking neuronal transmission. This is Toxin BomPI from Buthus occitanus mardochei (Moroccan scorpion).